An 865-amino-acid chain; its full sequence is Probable beta-glucosidase J (865 aa).

Residue Asp-233 is part of the active site. Asn-330, Asn-447, Asn-503, and Asn-764 each carry an N-linked (GlcNAc...) asparagine glycan. In terms of domain architecture, PA14 spans 411–579; it reads TGQPGYTFRV…DTDTAIQQAV (169 aa).

This sequence belongs to the glycosyl hydrolase 3 family.

Its subcellular location is the secreted. It carries out the reaction Hydrolysis of terminal, non-reducing beta-D-glucosyl residues with release of beta-D-glucose.. It participates in glycan metabolism; cellulose degradation. Its function is as follows. Beta-glucosidases are one of a number of cellulolytic enzymes involved in the degradation of cellulosic biomass. Catalyzes the last step releasing glucose from the inhibitory cellobiose. This is Probable beta-glucosidase J (bglJ) from Aspergillus fumigatus (strain ATCC MYA-4609 / CBS 101355 / FGSC A1100 / Af293) (Neosartorya fumigata).